Here is a 102-residue protein sequence, read N- to C-terminus: UPF0235 protein msl4154 (102 aa).

Belongs to the UPF0235 family.

This chain is UPF0235 protein msl4154, found in Mesorhizobium japonicum (strain LMG 29417 / CECT 9101 / MAFF 303099) (Mesorhizobium loti (strain MAFF 303099)).